The sequence spans 154 residues: SsrA-binding protein (154 aa).

Belongs to the SmpB family.

The protein localises to the cytoplasm. Required for rescue of stalled ribosomes mediated by trans-translation. Binds to transfer-messenger RNA (tmRNA), required for stable association of tmRNA with ribosomes. tmRNA and SmpB together mimic tRNA shape, replacing the anticodon stem-loop with SmpB. tmRNA is encoded by the ssrA gene; the 2 termini fold to resemble tRNA(Ala) and it encodes a 'tag peptide', a short internal open reading frame. During trans-translation Ala-aminoacylated tmRNA acts like a tRNA, entering the A-site of stalled ribosomes, displacing the stalled mRNA. The ribosome then switches to translate the ORF on the tmRNA; the nascent peptide is terminated with the 'tag peptide' encoded by the tmRNA and targeted for degradation. The ribosome is freed to recommence translation, which seems to be the essential function of trans-translation. The polypeptide is SsrA-binding protein (Streptococcus thermophilus (strain CNRZ 1066)).